Reading from the N-terminus, the 605-residue chain is Protein phosphatase 1D (605 aa).

The interval 1–101 (MAGLYSLGVS…CRRRSSVAFF (101 aa)) is interaction with CHEK1. The PPM-type phosphatase domain maps to 8-375 (GVSVFSDQGG…DNTSAIVICI (368 aa)). Residues 28 to 90 (VVEPEPTAEE…DAGASPAPSR (63 aa)) form a disordered region. Phosphoserine occurs at positions 40 and 85. Residues D105, G106, D314, and D366 each contribute to the Mn(2+) site. The tract at residues 516–591 (STPGQMKAQE…RRLRGQKKIG (76 aa)) is disordered. Polar residues-rich tracts occupy residues 530-544 (PPTNFKRTLEESNSG) and 555-577 (LSRSSGAQPASLPTTSQRKNSVK). The segment covering 579 to 588 (TMRRRLRGQK) has biased composition (basic residues).

The protein belongs to the PP2C family. In terms of assembly, interacts with CHEK1 and CHEK2; dephosphorylates them. Interacts with MAPK14. It depends on Mg(2+) as a cofactor. Mn(2+) serves as cofactor. Expressed in fetal and adult brain. Also detected in fetal liver and skeletal muscle, but not in their adult counterparts.

The protein localises to the nucleus. It is found in the cytoplasm. It localises to the cytosol. The enzyme catalyses O-phospho-L-seryl-[protein] + H2O = L-seryl-[protein] + phosphate. The catalysed reaction is O-phospho-L-threonyl-[protein] + H2O = L-threonyl-[protein] + phosphate. Functionally, involved in the negative regulation of p53 expression. Required for the relief of p53-dependent checkpoint mediated cell cycle arrest. Binds to and dephosphorylates 'Ser-15' of TP53 and 'Ser-345' of CHEK1 which contributes to the functional inactivation of these proteins. Mediates MAPK14 dephosphorylation and inactivation. Is also an important regulator of global heterochromatin silencing and critical in maintaining genome integrity. The protein is Protein phosphatase 1D (PPM1D) of Homo sapiens (Human).